The primary structure comprises 294 residues: Metallophosphoesterase MPPED2 (294 aa).

Residues Asp-65, His-67, Asp-86, Asn-117, and His-213 each contribute to the Mn(2+) site. 117-118 (NH) contacts GMP. GMP contacts are provided by residues 225-226 (KE) and 252-255 (GIHE). Position 254 (His-254) interacts with Mn(2+).

It belongs to the UPF0046 family. Homodimer. Mn(2+) is required as a cofactor. Co(2+) serves as cofactor. In terms of tissue distribution, expressed predominantly in fetal brain.

Its activity is regulated as follows. Inhibited by nmolar levels of AMP and GMP. Its function is as follows. Displays low metallophosphoesterase activity (in vitro). May play a role in the development of the nervous system. The sequence is that of Metallophosphoesterase MPPED2 (MPPED2) from Homo sapiens (Human).